Here is a 227-residue protein sequence, read N- to C-terminus: SPbeta prophage-derived uncharacterized membrane protein YomJ (227 aa).

Transmembrane regions (helical) follow at residues 16–36 (LFFL…IVGL) and 131–151 (GIVA…GLSA).

It localises to the cell membrane. This is SPbeta prophage-derived uncharacterized membrane protein YomJ (yomJ) from Bacillus subtilis (strain 168).